Reading from the N-terminus, the 426-residue chain is uncharacterized protein (426 aa).

Zn(2+) is bound at residue His277. The active site involves Glu278. Residues His281 and Glu357 each coordinate Zn(2+).

Belongs to the peptidase M48B family. Zn(2+) serves as cofactor.

This is an uncharacterized protein from Bacillus subtilis (strain 168).